Reading from the N-terminus, the 193-residue chain is Acyl carrier protein phosphodiesterase (193 aa).

This sequence belongs to the AcpH family.

The enzyme catalyses holo-[ACP] + H2O = apo-[ACP] + (R)-4'-phosphopantetheine + H(+). Functionally, converts holo-ACP to apo-ACP by hydrolytic cleavage of the phosphopantetheine prosthetic group from ACP. The sequence is that of Acyl carrier protein phosphodiesterase from Yersinia enterocolitica serotype O:8 / biotype 1B (strain NCTC 13174 / 8081).